Consider the following 344-residue polypeptide: Anthranilate phosphoribosyltransferase (344 aa).

5-phospho-alpha-D-ribose 1-diphosphate-binding positions include Gly-86, 89–90 (GD), Thr-94, 96–99 (NIST), 114–122 (KHGNKSASG), and Ser-126. Position 86 (Gly-86) interacts with anthranilate. Ser-98 contacts Mg(2+). Asn-117 provides a ligand contact to anthranilate. Arg-172 is an anthranilate binding site. Mg(2+)-binding residues include Asp-231 and Glu-232.

The protein belongs to the anthranilate phosphoribosyltransferase family. In terms of assembly, homodimer. The cofactor is Mg(2+).

It catalyses the reaction N-(5-phospho-beta-D-ribosyl)anthranilate + diphosphate = 5-phospho-alpha-D-ribose 1-diphosphate + anthranilate. It functions in the pathway amino-acid biosynthesis; L-tryptophan biosynthesis; L-tryptophan from chorismate: step 2/5. Functionally, catalyzes the transfer of the phosphoribosyl group of 5-phosphorylribose-1-pyrophosphate (PRPP) to anthranilate to yield N-(5'-phosphoribosyl)-anthranilate (PRA). This is Anthranilate phosphoribosyltransferase from Prochlorococcus marinus (strain MIT 9215).